Consider the following 352-residue polypeptide: Biotin synthase (352 aa).

Positions 44-262 constitute a Radical SAM core domain; sequence NRVQVSTLLS…LAVARILMPK (219 aa). [4Fe-4S] cluster-binding residues include Cys-59, Cys-63, and Cys-66. The [2Fe-2S] cluster site is built by Cys-103, Cys-134, Cys-194, and Arg-266.

The protein belongs to the radical SAM superfamily. Biotin synthase family. In terms of assembly, homodimer. It depends on [4Fe-4S] cluster as a cofactor. [2Fe-2S] cluster is required as a cofactor.

It catalyses the reaction (4R,5S)-dethiobiotin + (sulfur carrier)-SH + 2 reduced [2Fe-2S]-[ferredoxin] + 2 S-adenosyl-L-methionine = (sulfur carrier)-H + biotin + 2 5'-deoxyadenosine + 2 L-methionine + 2 oxidized [2Fe-2S]-[ferredoxin]. The protein operates within cofactor biosynthesis; biotin biosynthesis; biotin from 7,8-diaminononanoate: step 2/2. Functionally, catalyzes the conversion of dethiobiotin (DTB) to biotin by the insertion of a sulfur atom into dethiobiotin via a radical-based mechanism. This Pseudomonas putida (strain ATCC 47054 / DSM 6125 / CFBP 8728 / NCIMB 11950 / KT2440) protein is Biotin synthase.